The sequence spans 166 residues: Protein-export protein SecB (166 aa).

Polar residues predominate over residues 1 to 16 (MTDTSAAGNPTPGQQP). The tract at residues 1–21 (MTDTSAAGNPTPGQQPANPPS) is disordered.

Belongs to the SecB family. In terms of assembly, homotetramer, a dimer of dimers. One homotetramer interacts with 1 SecA dimer.

The protein localises to the cytoplasm. In terms of biological role, one of the proteins required for the normal export of preproteins out of the cell cytoplasm. It is a molecular chaperone that binds to a subset of precursor proteins, maintaining them in a translocation-competent state. It also specifically binds to its receptor SecA. In Hyphomonas neptunium (strain ATCC 15444), this protein is Protein-export protein SecB.